The following is a 269-amino-acid chain: Putative pyridoxine kinase (269 aa).

Asparagine 139 contributes to the ATP binding site. Glutamate 142 provides a ligand contact to Mg(2+). ATP-binding positions include 176 to 180 (KGGGR), aspartate 189, valine 205, glycine 214, and lysine 239.

It belongs to the ThiD family.

It catalyses the reaction pyridoxal + ATP = pyridoxal 5'-phosphate + ADP + H(+). Its function is as follows. Phosphorylates B6 vitamers; functions in a salvage pathway. Uses pyridoxal, pyridoxine, and pyridoxamine as substrates. The sequence is that of Putative pyridoxine kinase (pdxK) from Treponema pallidum (strain Nichols).